The following is a 1367-amino-acid chain: Histone acetyltransferase HAC2 (1367 aa).

Positions 110 to 151 are disordered; that stretch reads TSSIPGSSGSASETNSGSDITKQDFKNDSPSDSKKVQGSSTS. Residues 111 to 127 show a composition bias toward low complexity; that stretch reads SSIPGSSGSASETNSGS. Positions 130 to 144 are enriched in basic and acidic residues; sequence TKQDFKNDSPSDSKK. A run of 12 repeats spans residues 188 to 200, 223 to 235, 251 to 263, 286 to 298, 314 to 326, 349 to 361, 377 to 389, 418 to 430, 432 to 444, 459 to 471, 473 to 485, and 500 to 512. The 12 X 13 AA approximate repeats stretch occupies residues 188-512; the sequence is KLGTVVDIVE…IGVDIVEPMK (325 aa). The segment at 688 to 765 adopts a PHD-type zinc-finger fold; it reads HQICSPCHSR…EYICPTCLLE (78 aa). Positions 780–1213 constitute a CBP/p300-type HAT domain; that stretch reads DSGAKDLPET…ILHHLHTSNK (434 aa). Acetyl-CoA is bound by residues 903-905, 922-923, and Trp978; these read LDS and RT. Residues 1094–1157 form a ZZ-type 1; degenerate zinc finger; that stretch reads ELNYSCTRCS…QLSKVQVNGV (64 aa). Positions 1099, 1102, 1123, 1126, 1225, 1228, 1240, 1243, 1249, 1252, 1261, and 1263 each coordinate Zn(2+). The ZZ-type 2 zinc-finger motif lies at 1220–1273; the sequence is SSSLTCTACKKDVSTTIYFPCLLCPDYRACTGCYTKNRTLRHLHIFPTLPSANR. A TAZ-type zinc finger spans residues 1274–1359; that stretch reads APSRTVMVLE…NCPVPQCRDR (86 aa).

As to expression, rosette leaves, stems and flowers.

The protein localises to the nucleus. The enzyme catalyses L-lysyl-[protein] + acetyl-CoA = N(6)-acetyl-L-lysyl-[protein] + CoA + H(+). Its function is as follows. Acetyltransferase enzyme. Acetylates histones, giving a specific tag for transcriptional activation. No acetyltransferase activity found in vitro. This is Histone acetyltransferase HAC2 (HAC2) from Arabidopsis thaliana (Mouse-ear cress).